The sequence spans 304 residues: Bifunctional protein FolD (304 aa).

Residues 176–178 (GAS), Ile201, and Ile242 each bind NADP(+).

It belongs to the tetrahydrofolate dehydrogenase/cyclohydrolase family. Homodimer.

The enzyme catalyses (6R)-5,10-methylene-5,6,7,8-tetrahydrofolate + NADP(+) = (6R)-5,10-methenyltetrahydrofolate + NADPH. It carries out the reaction (6R)-5,10-methenyltetrahydrofolate + H2O = (6R)-10-formyltetrahydrofolate + H(+). It participates in one-carbon metabolism; tetrahydrofolate interconversion. Catalyzes the oxidation of 5,10-methylenetetrahydrofolate to 5,10-methenyltetrahydrofolate and then the hydrolysis of 5,10-methenyltetrahydrofolate to 10-formyltetrahydrofolate. In Gluconobacter oxydans (strain 621H) (Gluconobacter suboxydans), this protein is Bifunctional protein FolD.